The sequence spans 491 residues: Ketol-acid reductoisomerase (NADP(+)) (491 aa).

Residues 15-208 (AQLGKCRFMG…GGHRAGVLES (194 aa)) form the KARI N-terminal Rossmann domain. NADP(+) contacts are provided by residues 45 to 48 (CGAQ), R68, R76, S78, and 108 to 110 (DKQ). H132 is a catalytic residue. G158 contacts NADP(+). 2 KARI C-terminal knotted domains span residues 209–344 (SFVA…TAPQ) and 345–484 (YEGK…MTDM). Residues D217, E221, E389, and E393 each coordinate Mg(2+). S414 serves as a coordination point for substrate.

This sequence belongs to the ketol-acid reductoisomerase family. Mg(2+) is required as a cofactor.

The enzyme catalyses (2R)-2,3-dihydroxy-3-methylbutanoate + NADP(+) = (2S)-2-acetolactate + NADPH + H(+). It carries out the reaction (2R,3R)-2,3-dihydroxy-3-methylpentanoate + NADP(+) = (S)-2-ethyl-2-hydroxy-3-oxobutanoate + NADPH + H(+). The protein operates within amino-acid biosynthesis; L-isoleucine biosynthesis; L-isoleucine from 2-oxobutanoate: step 2/4. Its pathway is amino-acid biosynthesis; L-valine biosynthesis; L-valine from pyruvate: step 2/4. In terms of biological role, involved in the biosynthesis of branched-chain amino acids (BCAA). Catalyzes an alkyl-migration followed by a ketol-acid reduction of (S)-2-acetolactate (S2AL) to yield (R)-2,3-dihydroxy-isovalerate. In the isomerase reaction, S2AL is rearranged via a Mg-dependent methyl migration to produce 3-hydroxy-3-methyl-2-ketobutyrate (HMKB). In the reductase reaction, this 2-ketoacid undergoes a metal-dependent reduction by NADPH to yield (R)-2,3-dihydroxy-isovalerate. This chain is Ketol-acid reductoisomerase (NADP(+)), found in Escherichia coli (strain UTI89 / UPEC).